The following is a 398-amino-acid chain: Phosphoglycerate kinase (398 aa).

Residues 23–25 (DFN), R38, 61–64 (HMGK), R122, and R155 each bind substrate. ATP is bound by residues K206, G297, E328, and 354-357 (GGDS).

This sequence belongs to the phosphoglycerate kinase family. In terms of assembly, monomer.

The protein localises to the cytoplasm. The enzyme catalyses (2R)-3-phosphoglycerate + ATP = (2R)-3-phospho-glyceroyl phosphate + ADP. It participates in carbohydrate degradation; glycolysis; pyruvate from D-glyceraldehyde 3-phosphate: step 2/5. This Clostridium botulinum (strain Hall / ATCC 3502 / NCTC 13319 / Type A) protein is Phosphoglycerate kinase.